Reading from the N-terminus, the 229-residue chain is MTDMNKWRHIFKLDPAKPISDEDLMKICTSDTDAIMIGGTDDITEENVAHLMHKVKCYSLPIVLEISNLESVVPGFDLYFIPTVLNSRDVKYHNGLLLEALKSYGTLIDFNEVVFEGYVVLNPDCKVAKLTQADTMIDDEDIEAYAQMINDMYQLPVMYIEYSGVYGETNLVKAAADMLTETQLFYGGGISNYEEAEMMASIADTIIVGNIIYEDINKALKTVKVKETH.

Lys12 contributes to the sn-glycerol 1-phosphate binding site. 2 residues coordinate Mg(2+): Asp14 and Thr40. Residues 159 to 164, Gly189, and 209 to 210 each bind sn-glycerol 1-phosphate; these read YIEYSG and GN.

The protein belongs to the GGGP/HepGP synthase family. Group I subfamily. Homodimer. Mg(2+) serves as cofactor.

It carries out the reaction sn-glycerol 1-phosphate + all-trans-heptaprenyl diphosphate = 3-heptaprenyl-sn-glycero-1-phosphate + diphosphate. Its pathway is membrane lipid metabolism; glycerophospholipid metabolism. Its function is as follows. Prenyltransferase that catalyzes in vivo the transfer of the heptaprenyl moiety of heptaprenyl pyrophosphate (HepPP; 35 carbon atoms) to the C3 hydroxyl of sn-glycerol-1-phosphate (G1P), producing heptaprenylglyceryl phosphate (HepGP). This reaction is an ether-bond-formation step in the biosynthesis of archaea-type G1P-based membrane lipids found in Bacillales. The chain is Heptaprenylglyceryl phosphate synthase from Staphylococcus saprophyticus subsp. saprophyticus (strain ATCC 15305 / DSM 20229 / NCIMB 8711 / NCTC 7292 / S-41).